Reading from the N-terminus, the 116-residue chain is DNA-binding protein Tpen_0471 (116 aa).

This sequence belongs to the PDCD5 family.

This chain is DNA-binding protein Tpen_0471, found in Thermofilum pendens (strain DSM 2475 / Hrk 5).